Here is a 343-residue protein sequence, read N- to C-terminus: S-adenosylmethionine:tRNA ribosyltransferase-isomerase (343 aa).

Belongs to the QueA family. As to quaternary structure, monomer.

The protein resides in the cytoplasm. The enzyme catalyses 7-aminomethyl-7-carbaguanosine(34) in tRNA + S-adenosyl-L-methionine = epoxyqueuosine(34) in tRNA + adenine + L-methionine + 2 H(+). It functions in the pathway tRNA modification; tRNA-queuosine biosynthesis. In terms of biological role, transfers and isomerizes the ribose moiety from AdoMet to the 7-aminomethyl group of 7-deazaguanine (preQ1-tRNA) to give epoxyqueuosine (oQ-tRNA). This Hydrogenobaculum sp. (strain Y04AAS1) protein is S-adenosylmethionine:tRNA ribosyltransferase-isomerase.